The following is a 119-amino-acid chain: MQKLNRSFKISNEIKKKISWIICYQLCDPRLFNILISVSSVNLSRDFSYAKIYVSILNNKNISFKEILTILQNSSKHIRYLLAKGIFLRIIPTLHFCHDSSYVNGTKITNLINNVLYNK.

Belongs to the RbfA family. In terms of assembly, monomer. Binds 30S ribosomal subunits, but not 50S ribosomal subunits or 70S ribosomes.

It localises to the cytoplasm. Functionally, one of several proteins that assist in the late maturation steps of the functional core of the 30S ribosomal subunit. Associates with free 30S ribosomal subunits (but not with 30S subunits that are part of 70S ribosomes or polysomes). Required for efficient processing of 16S rRNA. May interact with the 5'-terminal helix region of 16S rRNA. The chain is Ribosome-binding factor A from Buchnera aphidicola subsp. Baizongia pistaciae (strain Bp).